The sequence spans 2752 residues: Serine/arginine repetitive matrix protein 2 (2752 aa).

Met-1 carries the N-acetylmethionine modification. The stretch at 60–92 (HERKRRVELRCLELEEMMEEQGYEEQQIQEKVA) forms a coiled coil. Lys-101 bears the N6-acetyllysine mark. Residues Lys-108 and Lys-130 each participate in a glycyl lysine isopeptide (Lys-Gly) (interchain with G-Cter in SUMO2) cross-link. A disordered region spans residues 141-2131 (ISDSYVDGSS…MSPTPLDRCR (1991 aa)). Tyr-145 bears the Phosphotyrosine mark. Lys-169 is modified (N6-acetyllysine). Residues 175 to 185 (RESSSSRSPTP) show a composition bias toward low complexity. 2 stretches are compositionally biased toward basic residues: residues 186–197 (KQKKKKKKKDRG) and 207–249 (RERK…KRSR). The sufficient for RNA-binding stretch occupies residues 197–259 (GRRSESSSPR…STTPAPKSRR (63 aa)). Phosphoserine occurs at positions 220 and 222. Low complexity predominate over residues 263 to 290 (STSADSASSSDTSRSRSRSAAAKTHTTA). Thr-286 carries the post-translational modification Phosphothreonine. Residues Ser-295, Ser-297, Ser-300, Ser-322, and Ser-323 each carry the phosphoserine modification. The span at 313–333 (PGTTSTQRPSSPETATKQPSS) shows a compositional bias: polar residues. A compositionally biased stretch (basic and acidic residues) spans 335-347 (YEDKDKDKKEKSA). Low complexity predominate over residues 348–360 (TRPSPSPERSSTG). Ser-351, Ser-353, Ser-357, and Ser-358 each carry phosphoserine. A phosphothreonine mark is found at Thr-359 and Thr-367. Residue Ser-377 is modified to Phosphoserine. Positions 380 to 398 (PLATTPLSQEPVNPPSEAS) are enriched in polar residues. A phosphothreonine mark is found at Thr-383 and Thr-384. Ser-387, Ser-395, Ser-398, Ser-404, and Ser-408 each carry phosphoserine. The span at 399-410 (PTRDRSPPKSPE) shows a compositional bias: basic and acidic residues. Residues 411–421 (KLPQSSSSESS) are compositionally biased toward low complexity. Phosphoserine occurs at positions 424, 435, 436, 437, 440, and 454. Residues 461 to 483 (NRSHGRAKRDKSHSHTPSRRMGR) show a composition bias toward basic residues. Phosphoserine occurs at positions 484, 486, 506, 508, 510, 534, 536, and 543. Positions 491–536 (KRGRSRSRTPTKRGHSRSRSPQWRRSRSAQRWGRSRSPQRRGRSRS) are enriched in basic residues. Over residues 537–546 (PQRPGWSRSR) the composition is skewed to low complexity. 3 stretches are compositionally biased toward basic residues: residues 547 to 564 (NTQR…RSHS), 571 to 723 (GRSR…RRGR), and 732 to 742 (NKSRTSQRRSR). Residues Ser-702, Ser-704, and Ser-706 each carry the phosphoserine modification. A phosphoserine mark is found at Ser-778, Ser-780, and Ser-783. Positions 790 to 805 (SQTPPRRSRSGSSQPK) are enriched in low complexity. The segment covering 806 to 816 (AKSRTPPRRSR) has biased composition (basic residues). The segment covering 828–841 (KTPSRQSHSSSSPH) has biased composition (low complexity). Residues Ser-846 and Ser-854 each carry the phosphoserine modification. The segment covering 849-869 (PPRQGSITSPQANEQSVTPQR) has biased composition (polar residues). The residue at position 856 (Thr-856) is a Phosphothreonine. Phosphoserine occurs at positions 857 and 864. Residue Thr-866 is modified to Phosphothreonine. Ser-871, Ser-875, Ser-876, Ser-908, Ser-935, Ser-950, Ser-952, Ser-954, Ser-957, Ser-968, Ser-970, Ser-972, Ser-973, and Ser-974 each carry phosphoserine. 2 stretches are compositionally biased toward low complexity: residues 901–917 (SSTP…SPQP) and 924–945 (SPRQ…TSRT). Thr-977 and Thr-983 each carry phosphothreonine. 2 positions are modified to phosphoserine: Ser-992 and Ser-994. Tyr-996 bears the Phosphotyrosine mark. Thr-1003 is subject to Phosphothreonine. Residues 1008-1017 (SLSGSKSPCP) are compositionally biased toward low complexity. Ser-1010, Ser-1014, Ser-1024, Ser-1028, Ser-1032, and Ser-1042 each carry phosphoserine. Positions 1040–1064 (KSSTPPGESYFGVSSLQLKGQSQTS) are enriched in polar residues. Thr-1043 carries the post-translational modification Phosphothreonine. Residue Tyr-1049 is modified to Phosphotyrosine. Phosphoserine is present on residues Ser-1064, Ser-1069, Ser-1072, Ser-1073, Ser-1083, Ser-1099, Ser-1101, Ser-1102, and Ser-1103. The span at 1071-1092 (TSSPEVRQSHSESPSLQSKSQT) shows a compositional bias: polar residues. A compositionally biased stretch (low complexity) spans 1093–1104 (SPKGGRSRSSSP). Thr-1106 carries the phosphothreonine modification. 9 positions are modified to phosphoserine: Ser-1112, Ser-1122, Ser-1124, Ser-1129, Ser-1132, Ser-1152, Ser-1179, Ser-1188, and Ser-1198. Over residues 1132–1159 (SPEQSRFQSDSSSYPTVDSNSLLGQSRL) the composition is skewed to polar residues. The segment covering 1204-1214 (DTLRTPPRERS) has biased composition (basic and acidic residues). The residue at position 1208 (Thr-1208) is a Phosphothreonine. 9 positions are modified to phosphoserine: Ser-1214, Ser-1219, Ser-1227, Ser-1254, Ser-1257, Ser-1258, Ser-1266, Ser-1270, and Ser-1271. Over residues 1216–1233 (AGSSPETKEQNSALPTSS) the composition is skewed to polar residues. The span at 1283–1292 (TLDQSQSQAS) shows a compositional bias: polar residues. Phosphoserine is present on residues Ser-1311, Ser-1318, Ser-1320, Ser-1326, Ser-1329, Ser-1336, Ser-1348, Ser-1368, Ser-1382, Ser-1383, Ser-1384, Ser-1387, Ser-1401, Ser-1403, and Ser-1404. The segment covering 1318–1328 (SNSPLRENSFG) has biased composition (polar residues). The span at 1376–1386 (TRSSGHSSSEL) shows a compositional bias: polar residues. Thr-1413 carries the phosphothreonine modification. Phosphoserine is present on residues Ser-1415, Ser-1421, Ser-1423, and Ser-1424. Thr-1434 bears the Phosphothreonine mark. The segment covering 1441-1452 (SGSSPGLRDGSG) has biased composition (low complexity). Phosphoserine is present on residues Ser-1444 and Ser-1451. Residue Thr-1453 is modified to Phosphothreonine. Residues 1453 to 1463 (TPSRHSLSGSS) are compositionally biased toward polar residues. Phosphoserine occurs at positions 1458, 1460, 1462, and 1463. Thr-1472 is modified (phosphothreonine). Residues Ser-1482 and Ser-1483 each carry the phosphoserine modification. Phosphothreonine is present on Thr-1492. Ser-1497, Ser-1499, Ser-1501, and Ser-1502 each carry phosphoserine. Thr-1511 is subject to Phosphothreonine. Residues Ser-1517, Ser-1519, Ser-1521, and Ser-1522 each carry the phosphoserine modification. Position 1531 is a phosphothreonine (Thr-1531). A compositionally biased stretch (polar residues) spans 1534–1544 (GQRSRSGSSQE). Phosphoserine is present on residues Ser-1537, Ser-1539, Ser-1541, Ser-1542, and Ser-1552. Positions 1555 to 1567 (ERSESDSSPDSKA) are enriched in basic and acidic residues. The segment covering 1568–1577 (KTRTPLRQRS) has biased composition (basic residues). Residues Ser-1577, Ser-1579, Ser-1581, Ser-1582, Ser-1598, Ser-1600, Ser-1601, Ser-1616, Ser-1620, Ser-1621, Ser-1648, Ser-1658, Ser-1691, Ser-1693, and Ser-1694 each carry the phosphoserine modification. Residues 1638-1657 (SGSSSKGRGPSPEGSSSTES) show a composition bias toward low complexity. Over residues 1681–1691 (KSRTPPRRRSS) the composition is skewed to basic residues. Thr-1698 is modified (phosphothreonine). A phosphoserine mark is found at Ser-1727, Ser-1729, Ser-1731, Ser-1732, Ser-1762, and Ser-1764. Basic residues-rich tracts occupy residues 1769–1789 (GLQR…RRRD) and 1798–1816 (SRRR…RRRG). A phosphoserine mark is found at Ser-1818, Ser-1822, Ser-1854, Ser-1857, Ser-1876, and Ser-1878. A compositionally biased stretch (basic residues) spans 1834–1854 (SSRRRRGRSRTPPTSRKRSRS). The span at 1862–2068 (KRSRSRASPA…PRTARGKRSL (207 aa)) shows a compositional bias: basic residues. Phosphothreonine is present on Thr-1880. A phosphoserine mark is found at Ser-1884 and Ser-1890. A Phosphothreonine modification is found at Thr-1892. 5 positions are modified to phosphoserine: Ser-1893, Ser-1916, Ser-1919, Ser-1923, and Ser-1925. Phosphothreonine is present on residues Thr-1927 and Thr-1931. Ser-1946 and Ser-1948 each carry phosphoserine. 2 positions are modified to phosphothreonine: Thr-1950 and Thr-1954. Residues Ser-1958 and Ser-1960 each carry the phosphoserine modification. Phosphothreonine is present on residues Thr-1962 and Thr-1966. Ser-1970, Ser-1972, and Ser-1975 each carry phosphoserine. At Thr-1978 the chain carries Phosphothreonine. 8 positions are modified to phosphoserine: Ser-1984, Ser-1987, Ser-1996, Ser-1999, Ser-2008, Ser-2011, Ser-2018, and Ser-2020. Thr-2022 is modified (phosphothreonine). 2 positions are modified to phosphoserine: Ser-2030 and Ser-2032. Thr-2034 bears the Phosphothreonine mark. A phosphoserine mark is found at Ser-2042, Ser-2044, Ser-2046, and Ser-2067. Position 2069 is a phosphothreonine (Thr-2069). Residues 2070 to 2095 (RSPPAIRRRSASGSSSDRSRSATPPA) show a composition bias toward low complexity. Phosphoserine occurs at positions 2071 and 2090. Thr-2092 bears the Phosphothreonine mark. Polar residues predominate over residues 2097–2124 (RNHSGSRTPPVALNSSRMSCFSRPSMSP). 2 positions are modified to phosphoserine: Ser-2100 and Ser-2102. Thr-2104 carries the phosphothreonine modification. Phosphoserine occurs at positions 2118, 2121, 2123, and 2132. Thr-2144 bears the Phosphothreonine mark. An omega-N-methylarginine mark is found at Arg-2194, Arg-2207, Arg-2231, and Arg-2246. Position 2272 is a phosphoserine (Ser-2272). Omega-N-methylarginine occurs at positions 2274 and 2288. A phosphothreonine mark is found at Thr-2289, Thr-2291, and Thr-2302. Ser-2310 carries the post-translational modification Phosphoserine. The segment at 2311 to 2342 (LTGSGTPPTAANYPSSSRTPQAPASANLVGPR) is disordered. A phosphothreonine mark is found at Thr-2316 and Thr-2329. A compositionally biased stretch (polar residues) spans 2317–2334 (PPTAANYPSSSRTPQAPA). Phosphoserine is present on Ser-2335. Position 2342 is an omega-N-methylarginine (Arg-2342). Phosphoserine occurs at positions 2343, 2368, and 2376. Thr-2381 carries the post-translational modification Phosphothreonine. Residue Ser-2382 is modified to Phosphoserine. The residue at position 2384 (Arg-2384) is an Asymmetric dimethylarginine; alternate. At Arg-2384 the chain carries Omega-N-methylarginine; alternate. A disordered region spans residues 2389–2752 (AYERVSGRTS…PMRHRSSRSP (364 aa)). 3 positions are modified to phosphoserine: Ser-2394, Ser-2398, and Ser-2407. Thr-2409 is modified (phosphothreonine). Phosphoserine occurs at positions 2412, 2415, 2426, 2429, 2449, and 2453. Positions 2426-2439 (SPSSRMGQAPSQSL) are enriched in polar residues. The span at 2455–2473 (FSDQSRCLIAQTTPVAGSQ) shows a compositional bias: polar residues. Low complexity-rich tracts occupy residues 2474–2487 (SLSS…TSSA), 2515–2526 (AQQPSALAALQP), and 2533–2567 (SSSS…EGSS). At Ser-2581 the chain carries Phosphoserine. Thr-2583 carries the phosphothreonine modification. Lys-2587 participates in a covalent cross-link: Glycyl lysine isopeptide (Lys-Gly) (interchain with G-Cter in SUMO2). A Phosphothreonine modification is found at Thr-2599. The segment covering 2608–2648 (SSSSSSSSSSSSSSSSSSSSSSSSSSSSSSSSSSSSSSSSS) has biased composition (low complexity). The segment covering 2651-2668 (PAKPGPQALPKPASPKKP) has biased composition (pro residues). Residues Ser-2664, Ser-2675, Ser-2677, Ser-2684, Ser-2688, Ser-2690, Ser-2692, Ser-2694, Ser-2702, and Ser-2706 each carry the phosphoserine modification. Positions 2669–2689 (PPGERRSRSPRKPIDSLRDSR) are enriched in basic and acidic residues. Low complexity predominate over residues 2707-2716 (PRDQQSSSSE). Residues 2717–2729 (RGSRRGQRGDSRS) show a composition bias toward basic and acidic residues. A Phosphothreonine modification is found at Thr-2738. Ser-2740 bears the Phosphoserine mark. Residues 2743–2752 (PMRHRSSRSP) show a composition bias toward basic residues.

This sequence belongs to the CWC21 family. In terms of assembly, component of pre-catalytic, catalytic and post-catalytic spliceosome complexes. Found in a pre-mRNA splicing complex with SFRS4, SFRS5, SNRP70, SNRPA1, SRRM1 and SRRM2. Component of the minor spliceosome, which splices U12-type introns. Interacts with DHX8. Interacts with CACTIN. In terms of tissue distribution, expressed in liver, placenta, and white blood cells.

It is found in the nucleus. It localises to the nucleus speckle. Required for pre-mRNA splicing as component of the spliceosome. As a component of the minor spliceosome, involved in the splicing of U12-type introns in pre-mRNAs. This is Serine/arginine repetitive matrix protein 2 (SRRM2) from Homo sapiens (Human).